The chain runs to 150 residues: 3-hydroxyacyl-[acyl-carrier-protein] dehydratase FabZ (150 aa).

Histidine 54 is an active-site residue.

The protein belongs to the thioester dehydratase family. FabZ subfamily.

Its subcellular location is the cytoplasm. The catalysed reaction is a (3R)-hydroxyacyl-[ACP] = a (2E)-enoyl-[ACP] + H2O. Functionally, involved in unsaturated fatty acids biosynthesis. Catalyzes the dehydration of short chain beta-hydroxyacyl-ACPs and long chain saturated and unsaturated beta-hydroxyacyl-ACPs. The protein is 3-hydroxyacyl-[acyl-carrier-protein] dehydratase FabZ of Chromobacterium violaceum (strain ATCC 12472 / DSM 30191 / JCM 1249 / CCUG 213 / NBRC 12614 / NCIMB 9131 / NCTC 9757 / MK).